Reading from the N-terminus, the 104-residue chain is Large ribosomal subunit protein uL24 (104 aa).

Belongs to the universal ribosomal protein uL24 family. As to quaternary structure, part of the 50S ribosomal subunit.

One of two assembly initiator proteins, it binds directly to the 5'-end of the 23S rRNA, where it nucleates assembly of the 50S subunit. Its function is as follows. One of the proteins that surrounds the polypeptide exit tunnel on the outside of the subunit. The protein is Large ribosomal subunit protein uL24 of Halothermothrix orenii (strain H 168 / OCM 544 / DSM 9562).